Reading from the N-terminus, the 84-residue chain is Acyl carrier protein MbtL (84 aa).

The Carrier domain maps to 6 to 81 (STVSTTLLSI…ELEAAIAAKY (76 aa)). S41 carries the post-translational modification O-(pantetheine 4'-phosphoryl)serine.

4'-phosphopantetheine is transferred from CoA to a specific serine of apo-ACP, leading to the activated holo-ACP form.

The protein resides in the cytoplasm. The protein operates within siderophore biosynthesis; mycobactin biosynthesis. Its function is as follows. Acyl carrier protein involved in the formation of acyl-S-ACP intermediates within the mycobactin biosynthesis process. The aliphatic chains carried by ACP are subsequently transferred on to the mycobactin core by MbtK. The protein is Acyl carrier protein MbtL (mbtL) of Mycobacterium bovis (strain ATCC BAA-935 / AF2122/97).